A 338-amino-acid polypeptide reads, in one-letter code: Malate dehydrogenase, mitochondrial (338 aa).

Residues 1–24 (MLSALARPASAALRRSFSTSAQNN) constitute a mitochondrion transit peptide. Residues 31–37 (GASGGIG) and Asp57 contribute to the NAD(+) site. Ser33 is a glycosylation site (O-linked (GlcNAc) serine). Lys78 and Lys91 each carry N6-acetyllysine; alternate. N6-succinyllysine; alternate occurs at positions 78 and 91. Substrate is bound by residues Arg104 and Arg110. Residues Asn117 and 140-142 (IAN) contribute to the NAD(+) site. Asn142 is a substrate binding site. N6-acetyllysine is present on Lys165. Position 176 (Arg176) interacts with substrate. The residue at position 185 (Lys185) is an N6-acetyllysine; alternate. N6-succinyllysine; alternate is present on Lys185. The Proton acceptor role is filled by His200. Position 203 is an N6-succinyllysine (Lys203). Lys215 and Lys239 each carry N6-acetyllysine; alternate. Residues Lys215 and Lys239 each carry the N6-succinyllysine; alternate modification. Lys239 is modified (N6-malonyllysine; alternate). Residue Ser246 is modified to Phosphoserine. Position 251 (Met251) interacts with NAD(+). Residue Lys269 is modified to N6-succinyllysine. N6-acetyllysine; alternate occurs at positions 296, 301, 307, 314, and 324. N6-succinyllysine; alternate is present on residues Lys296, Lys301, Lys307, Lys314, and Lys324. An N6-malonyllysine; alternate modification is found at Lys307. A Phosphoserine modification is found at Ser326. N6-acetyllysine; alternate is present on residues Lys328, Lys329, and Lys335. N6-succinyllysine; alternate is present on Lys328. Lys329 carries the post-translational modification N6-malonyllysine; alternate. N6-succinyllysine; alternate is present on Lys335.

Belongs to the LDH/MDH superfamily. MDH type 1 family. As to quaternary structure, homodimer. Acetylation is enhanced by up to 67% after treatment either with trichostin A (TSA) or with nicotinamide (NAM) with the appearance of tri- and tetraacetylations. Glucose also increases acetylation by about 60%.

Its subcellular location is the mitochondrion matrix. The enzyme catalyses (S)-malate + NAD(+) = oxaloacetate + NADH + H(+). With respect to regulation, enzyme activity is enhanced by acetylation. The polypeptide is Malate dehydrogenase, mitochondrial (MDH2) (Homo sapiens (Human)).